A 103-amino-acid polypeptide reads, in one-letter code: DNA-binding protein TRF1 (103 aa).

Its function is as follows. DNA-binding protein that recognizes the inverted terminal repeats of the pGKl linear DNA plasmids. The protein is DNA-binding protein TRF1 (TRF1) of Kluyveromyces lactis (strain ATCC 8585 / CBS 2359 / DSM 70799 / NBRC 1267 / NRRL Y-1140 / WM37) (Yeast).